A 446-amino-acid chain; its full sequence is Phosphoglucosamine mutase (446 aa).

S102 serves as the catalytic Phosphoserine intermediate. S102, D241, D243, and D245 together coordinate Mg(2+). Position 102 is a phosphoserine (S102).

It belongs to the phosphohexose mutase family. Mg(2+) is required as a cofactor. Post-translationally, activated by phosphorylation.

The catalysed reaction is alpha-D-glucosamine 1-phosphate = D-glucosamine 6-phosphate. In terms of biological role, catalyzes the conversion of glucosamine-6-phosphate to glucosamine-1-phosphate. This Idiomarina loihiensis (strain ATCC BAA-735 / DSM 15497 / L2-TR) protein is Phosphoglucosamine mutase.